Reading from the N-terminus, the 203-residue chain is Urease accessory protein UreG (203 aa).

Residue 11-18 (GPVGSGKT) coordinates GTP.

It belongs to the SIMIBI class G3E GTPase family. UreG subfamily. In terms of assembly, homodimer. UreD, UreF and UreG form a complex that acts as a GTP-hydrolysis-dependent molecular chaperone, activating the urease apoprotein by helping to assemble the nickel containing metallocenter of UreC. The UreE protein probably delivers the nickel.

It localises to the cytoplasm. Its function is as follows. Facilitates the functional incorporation of the urease nickel metallocenter. This process requires GTP hydrolysis, probably effectuated by UreG. The polypeptide is Urease accessory protein UreG (Prochlorococcus marinus (strain AS9601)).